Consider the following 255-residue polypeptide: Ditrans,polycis-undecaprenyl-diphosphate synthase ((2E,6E)-farnesyl-diphosphate specific) (255 aa).

Residue Asp-21 is part of the active site. Asp-21 is a binding site for Mg(2+). Substrate contacts are provided by residues 22-25, Trp-26, Arg-34, His-38, and 66-68; these read GNGR and SSE. The active-site Proton acceptor is the Asn-69. Substrate contacts are provided by residues Trp-70, Arg-72, Arg-189, and 195–197; that span reads RIS. Glu-208 contributes to the Mg(2+) binding site.

The protein belongs to the UPP synthase family. As to quaternary structure, homodimer. The cofactor is Mg(2+).

It carries out the reaction 8 isopentenyl diphosphate + (2E,6E)-farnesyl diphosphate = di-trans,octa-cis-undecaprenyl diphosphate + 8 diphosphate. Functionally, catalyzes the sequential condensation of isopentenyl diphosphate (IPP) with (2E,6E)-farnesyl diphosphate (E,E-FPP) to yield (2Z,6Z,10Z,14Z,18Z,22Z,26Z,30Z,34E,38E)-undecaprenyl diphosphate (di-trans,octa-cis-UPP). UPP is the precursor of glycosyl carrier lipid in the biosynthesis of bacterial cell wall polysaccharide components such as peptidoglycan and lipopolysaccharide. This Xylella fastidiosa (strain 9a5c) protein is Ditrans,polycis-undecaprenyl-diphosphate synthase ((2E,6E)-farnesyl-diphosphate specific).